Consider the following 739-residue polypeptide: NAD(P)H-quinone oxidoreductase subunit 5, chloroplastic (739 aa).

Transmembrane regions (helical) follow at residues Trp9–Val29, Ile39–Ala59, Ile89–Ile109, Phe125–Ile145, Ile147–Thr167, Gly185–Phe205, Leu224–Phe244, Thr258–Ala278, Leu280–Ile300, Leu327–Ile347, Ala354–Ser374, Thr396–Ser416, Trp425–Tyr445, Leu544–Phe564, Ile603–Val623, and Ile716–Phe736.

This sequence belongs to the complex I subunit 5 family. NDH is composed of at least 16 different subunits, 5 of which are encoded in the nucleus.

The protein localises to the plastid. It localises to the chloroplast thylakoid membrane. It carries out the reaction a plastoquinone + NADH + (n+1) H(+)(in) = a plastoquinol + NAD(+) + n H(+)(out). The catalysed reaction is a plastoquinone + NADPH + (n+1) H(+)(in) = a plastoquinol + NADP(+) + n H(+)(out). Its function is as follows. NDH shuttles electrons from NAD(P)H:plastoquinone, via FMN and iron-sulfur (Fe-S) centers, to quinones in the photosynthetic chain and possibly in a chloroplast respiratory chain. The immediate electron acceptor for the enzyme in this species is believed to be plastoquinone. Couples the redox reaction to proton translocation, and thus conserves the redox energy in a proton gradient. The protein is NAD(P)H-quinone oxidoreductase subunit 5, chloroplastic (ndhF) of Acorus calamus (Sweet flag).